The primary structure comprises 554 residues: Exodeoxyribonuclease 7 large subunit (554 aa).

This sequence belongs to the XseA family. Heterooligomer composed of large and small subunits.

The protein resides in the cytoplasm. It carries out the reaction Exonucleolytic cleavage in either 5'- to 3'- or 3'- to 5'-direction to yield nucleoside 5'-phosphates.. In terms of biological role, bidirectionally degrades single-stranded DNA into large acid-insoluble oligonucleotides, which are then degraded further into small acid-soluble oligonucleotides. The polypeptide is Exodeoxyribonuclease 7 large subunit (Chlamydia pneumoniae (Chlamydophila pneumoniae)).